We begin with the raw amino-acid sequence, 422 residues long: 5-hydroxytryptamine receptor 1A (422 aa).

Residues 1 to 38 (MDVFSFGQGNNTTASQEPFGTGGNVTSISDVTFSYQVI) are Extracellular-facing. Residues Asn10, Asn11, and Asn24 are each glycosylated (N-linked (GlcNAc...) asparagine). A helical transmembrane segment spans residues 39-59 (TSLLLGTLIFCAVLGNACVVA). The Cytoplasmic portion of the chain corresponds to 60 to 73 (AIALERSLQNVANY). The helical transmembrane segment at 74 to 98 (LIGSLAVTDLMVSVLVLPMAALYQV) threads the bilayer. Topologically, residues 99-107 (LNKWTLGQV) are extracellular. Residues 108 to 132 (TCDLFIALDVLCCTSSILHLCAIAL) form a helical membrane-spanning segment. Cys109 and Cys187 form a disulfide bridge. Serotonin-binding residues include Asp116 and Cys120. Residues 133–135 (DRY) carry the DRY motif; important for ligand-induced conformation changes motif. At 133-152 (DRYWAITDPIDYVNKRTPRR) the chain is on the cytoplasmic side. A helical membrane pass occupies residues 153–174 (AAALISLTWLIGFLISIPPMLG). The Extracellular segment spans residues 175-193 (WRTPEDRSDPDACTISKDH). Residues 194-216 (GYTIYSTFGAFYIPLLLMLVLYG) traverse the membrane as a helical segment. Residues 217–346 (RIFRAARFRI…LARERKTVKT (130 aa)) are Cytoplasmic-facing. Residues 235-261 (KKGAGTSLGTSSAPPPKKSLNGQPGSG) are disordered. Positions 345, 346, and 352 each coordinate 1D-myo-inositol 4-phosphate. The chain crosses the membrane as a helical span at residues 347 to 370 (LGIIMGTFILCWLPFFIVALVLPF). The Extracellular segment spans residues 371–378 (CESSCHMP). The helical transmembrane segment at 379-403 (ALLGAIINWLGYSNSLLNPVIYAYF) threads the bilayer. Residues 396–400 (NPVIY) carry the NPxxY motif; important for ligand-induced conformation changes and signaling motif. Residues Phe403, Asn404, and Lys405 each coordinate 1D-myo-inositol 4-phosphate. Residues 404–422 (NKDFQNAFKKIIKCKFCRR) are Cytoplasmic-facing.

This sequence belongs to the G-protein coupled receptor 1 family. 5-hydroxytryptamine receptor subfamily. HTR1A sub-subfamily. In terms of assembly, heterodimer; heterodimerizes with GPER1. Interacts with YIF1B. Interacts with GPR39 and GALR1. In terms of tissue distribution, detected in hypothalamus, mesencephalon, amygdala, medulla, thalamus, septum and hippocampus.

The protein localises to the cell membrane. It localises to the cell projection. The protein resides in the dendrite. Its activity is regulated as follows. G-protein coupled receptor activity is regulated by lipids: phosphatidylinositol 4-phosphate increases HTR1A-mediated activity. Functionally, G-protein coupled receptor for 5-hydroxytryptamine (serotonin). Also functions as a receptor for various drugs and psychoactive substances. Ligand binding causes a conformation change that triggers signaling via guanine nucleotide-binding proteins (G proteins) and modulates the activity of downstream effectors, such as adenylate cyclase. HTR1A is coupled to G(i)/G(o) G alpha proteins and mediates inhibitory neurotransmission: signaling inhibits adenylate cyclase activity and activates a phosphatidylinositol-calcium second messenger system that regulates the release of Ca(2+) ions from intracellular stores. Beta-arrestin family members regulate signaling by mediating both receptor desensitization and resensitization processes. The polypeptide is 5-hydroxytryptamine receptor 1A (Rattus norvegicus (Rat)).